The primary structure comprises 309 residues: Porphobilinogen deaminase (309 aa).

An S-(dipyrrolylmethanemethyl)cysteine modification is found at cysteine 240.

The protein belongs to the HMBS family. In terms of assembly, monomer. Dipyrromethane serves as cofactor.

It catalyses the reaction 4 porphobilinogen + H2O = hydroxymethylbilane + 4 NH4(+). The protein operates within porphyrin-containing compound metabolism; protoporphyrin-IX biosynthesis; coproporphyrinogen-III from 5-aminolevulinate: step 2/4. In terms of biological role, tetrapolymerization of the monopyrrole PBG into the hydroxymethylbilane pre-uroporphyrinogen in several discrete steps. The protein is Porphobilinogen deaminase of Brevibacillus brevis (strain 47 / JCM 6285 / NBRC 100599).